The primary structure comprises 156 residues: Putative NrdI-like protein (156 aa).

The protein is Putative NrdI-like protein of Streptococcus pneumoniae (strain ATCC BAA-255 / R6).